Consider the following 224-residue polypeptide: Urease accessory protein UreF 2 (224 aa).

Belongs to the UreF family. As to quaternary structure, ureD, UreF and UreG form a complex that acts as a GTP-hydrolysis-dependent molecular chaperone, activating the urease apoprotein by helping to assemble the nickel containing metallocenter of UreC. The UreE protein probably delivers the nickel.

The protein resides in the cytoplasm. Required for maturation of urease via the functional incorporation of the urease nickel metallocenter. This is Urease accessory protein UreF 2 from Pseudomonas syringae pv. tomato (strain ATCC BAA-871 / DC3000).